Here is a 294-residue protein sequence, read N- to C-terminus: 4-diphosphocytidyl-2-C-methyl-D-erythritol kinase (294 aa).

Residue lysine 23 is part of the active site. Position 106–116 (106–116 (PMGGGLGGGSS)) interacts with ATP. Aspartate 148 is a catalytic residue.

It belongs to the GHMP kinase family. IspE subfamily.

It catalyses the reaction 4-CDP-2-C-methyl-D-erythritol + ATP = 4-CDP-2-C-methyl-D-erythritol 2-phosphate + ADP + H(+). It participates in isoprenoid biosynthesis; isopentenyl diphosphate biosynthesis via DXP pathway; isopentenyl diphosphate from 1-deoxy-D-xylulose 5-phosphate: step 3/6. Its function is as follows. Catalyzes the phosphorylation of the position 2 hydroxy group of 4-diphosphocytidyl-2C-methyl-D-erythritol. This chain is 4-diphosphocytidyl-2-C-methyl-D-erythritol kinase, found in Nitrosospira multiformis (strain ATCC 25196 / NCIMB 11849 / C 71).